Here is a 271-residue protein sequence, read N- to C-terminus: Acyl-[acyl-carrier-protein]--UDP-N-acetylglucosamine O-acyltransferase (271 aa).

The protein belongs to the transferase hexapeptide repeat family. LpxA subfamily. Homotrimer.

It is found in the cytoplasm. The enzyme catalyses a (3R)-hydroxyacyl-[ACP] + UDP-N-acetyl-alpha-D-glucosamine = a UDP-3-O-[(3R)-3-hydroxyacyl]-N-acetyl-alpha-D-glucosamine + holo-[ACP]. Its pathway is glycolipid biosynthesis; lipid IV(A) biosynthesis; lipid IV(A) from (3R)-3-hydroxytetradecanoyl-[acyl-carrier-protein] and UDP-N-acetyl-alpha-D-glucosamine: step 1/6. In terms of biological role, involved in the biosynthesis of lipid A, a phosphorylated glycolipid that anchors the lipopolysaccharide to the outer membrane of the cell. The protein is Acyl-[acyl-carrier-protein]--UDP-N-acetylglucosamine O-acyltransferase of Agrobacterium fabrum (strain C58 / ATCC 33970) (Agrobacterium tumefaciens (strain C58)).